Reading from the N-terminus, the 398-residue chain is Ribosomal RNA large subunit methyltransferase I (398 aa).

The PUA domain maps to 2–79 (SVRLVLAKGR…LSESIDIAFF (78 aa)).

This sequence belongs to the methyltransferase superfamily. RlmI family.

It is found in the cytoplasm. The enzyme catalyses cytidine(1962) in 23S rRNA + S-adenosyl-L-methionine = 5-methylcytidine(1962) in 23S rRNA + S-adenosyl-L-homocysteine + H(+). Specifically methylates the cytosine at position 1962 (m5C1962) of 23S rRNA. This Shigella dysenteriae serotype 1 (strain Sd197) protein is Ribosomal RNA large subunit methyltransferase I.